Here is a 1711-residue protein sequence, read N- to C-terminus: Receptor-type tyrosine-protein phosphatase V (1711 aa).

The first 17 residues, 1 to 17 (MRPLILLAALLWLQGFL), serve as a signal peptide directing secretion. Over 18–1074 (AEDDACSSLE…SEPRASISLA (1057 aa)) the chain is Extracellular. Fibronectin type-III domains lie at 37–129 (PLLS…TAPT), 130–222 (VVRG…VPPD), 218–305 (PVPP…EWTY), 306–391 (PSYP…LAES), 393–470 (ALPR…ISGY), 475–569 (PPQS…APPT), 565–654 (PAPP…TGWT), 655–749 (PPSA…IPNE), 744–831 (PLIP…VLSV), and 832–926 (EPGP…SAEA). Residues Asn42, Asn74, Asn89, Asn117, Asn174, Asn239, and Asn259 are each glycosylated (N-linked (GlcNAc...) asparagine). Asn431 carries N-linked (GlcNAc...) asparagine glycosylation. Asn570, Asn620, Asn649, Asn663, and Asn737 each carry an N-linked (GlcNAc...) asparagine glycan. N-linked (GlcNAc...) asparagine glycans are attached at residues Asn851, Asn882, Asn970, and Asn982. Residues 1075–1095 (IIPLTVMLGAVVGSIVIVCAV) traverse the membrane as a helical segment. Residues 1096-1711 (LCLLRWRCLK…PRAGKWPAPC (616 aa)) lie on the Cytoplasmic side of the membrane. Tyrosine-protein phosphatase domains lie at 1150–1409 (FFQE…LLNK) and 1427–1696 (DFAQ…LNSA). Substrate contacts are provided by residues Asp1316, 1350–1356 (CSAGVGR), and Gln1394. Residue Cys1350 is the Phosphocysteine intermediate of the active site.

The protein belongs to the protein-tyrosine phosphatase family. Receptor class 3 subfamily. The cytoplasmic domain contains potential phosphorylation sites. In terms of tissue distribution, bone and testis. In the latter, restricted to the basal portion of the seminiferous tubule.

The protein resides in the membrane. It carries out the reaction O-phospho-L-tyrosyl-[protein] + H2O = L-tyrosyl-[protein] + phosphate. Protein tyrosine phosphatase that acts as a regulator of energy metabolism. Prevents decarboxylation of osteocalcin (Bglap) via an indirect mechanism, preventing the hormone activity of osteocalcin. Functions in signaling pathways during bone remodeling, as well as serve a broader role in cell interactions associated with differentiation in bone and testis. Associated with differentiation in bone and testis. This is Receptor-type tyrosine-protein phosphatase V (Ptprv) from Rattus norvegicus (Rat).